Consider the following 299-residue polypeptide: Diaminopimelate epimerase (299 aa).

N11 and N63 together coordinate substrate. The Proton donor role is filled by C72. Residues 73–74 (GN), N211, and 229–230 (ER) each bind substrate. C238 (proton acceptor) is an active-site residue. Residue 239 to 240 (GT) coordinates substrate.

The protein belongs to the diaminopimelate epimerase family. As to quaternary structure, homodimer.

The protein resides in the cytoplasm. It catalyses the reaction (2S,6S)-2,6-diaminopimelate = meso-2,6-diaminopimelate. Its pathway is amino-acid biosynthesis; L-lysine biosynthesis via DAP pathway; DL-2,6-diaminopimelate from LL-2,6-diaminopimelate: step 1/1. In terms of biological role, catalyzes the stereoinversion of LL-2,6-diaminopimelate (L,L-DAP) to meso-diaminopimelate (meso-DAP), a precursor of L-lysine and an essential component of the bacterial peptidoglycan. The sequence is that of Diaminopimelate epimerase from Natranaerobius thermophilus (strain ATCC BAA-1301 / DSM 18059 / JW/NM-WN-LF).